A 465-amino-acid chain; its full sequence is MTSEKVETVVAGNYLEMEREEEGSKSTTGKLSKFFWHGGSVYDAWFSCASNQVAQVLLTLPYSFSQLGMLSGILFQIFYGLMGSWTAYIISVLYVEYRTRKEREKVDFRNHVIQWFEVLDGLLGKHWRNLGLFFNCTFLLFGSVIQLIACASNIYYINDHLDKRTWTYIFGACCATTVFIPSFHNYRIWSFLGLVMTTYTAWYMTIASILHGQAEDVKHSGPTKLVLYFTGATNILYTFGGHAVTVEIMHAMWKPQKFKMIYLIATLYVMTLTLPSAAAVYWAFGDNLLTHSNALSLLPRTGFRDTAVILMLIHQFITFGFACTPLYFVWEKFLGVHETKSLLKRALVRLPVVIPIWFLAIIFPFFGPINSTVGSLLVSFTVYIIPALAHMVTFASAPARENAVERPPSFLGGWVGLYSVNVFVAVWVLVVGFGLGGWASMLNFVHQIKTFGLFAKCFQCPPHKA.

Residues 1–52 (MTSEKVETVVAGNYLEMEREEEGSKSTTGKLSKFFWHGGSVYDAWFSCASNQ) are Cytoplasmic-facing. The chain crosses the membrane as a helical span at residues 53–70 (VAQVLLTLPYSFSQLGML). The Extracellular portion of the chain corresponds to 71-72 (SG). The helical transmembrane segment at 73 to 93 (ILFQIFYGLMGSWTAYIISVL) threads the bilayer. The Cytoplasmic segment spans residues 94–129 (YVEYRTRKEREKVDFRNHVIQWFEVLDGLLGKHWRN). A helical membrane pass occupies residues 130-150 (LGLFFNCTFLLFGSVIQLIAC). Over 151–165 (ASNIYYINDHLDKRT) the chain is Extracellular. Residues 166 to 186 (WTYIFGACCATTVFIPSFHNY) form a helical membrane-spanning segment. Residues 187–189 (RIW) lie on the Cytoplasmic side of the membrane. A helical membrane pass occupies residues 190-210 (SFLGLVMTTYTAWYMTIASIL). Residues 211-225 (HGQAEDVKHSGPTKL) lie on the Extracellular side of the membrane. A helical membrane pass occupies residues 226-246 (VLYFTGATNILYTFGGHAVTV). Residues 247-259 (EIMHAMWKPQKFK) lie on the Cytoplasmic side of the membrane. Residues 260-280 (MIYLIATLYVMTLTLPSAAAV) form a helical membrane-spanning segment. Topologically, residues 281-307 (YWAFGDNLLTHSNALSLLPRTGFRDTA) are extracellular. The helical transmembrane segment at 308–328 (VILMLIHQFITFGFACTPLYF) threads the bilayer. Topologically, residues 329–349 (VWEKFLGVHETKSLLKRALVR) are cytoplasmic. A helical membrane pass occupies residues 350 to 370 (LPVVIPIWFLAIIFPFFGPIN). The Extracellular segment spans residues 371–374 (STVG). Residues 375–395 (SLLVSFTVYIIPALAHMVTFA) form a helical membrane-spanning segment. Residues 396–421 (SAPARENAVERPPSFLGGWVGLYSVN) are Cytoplasmic-facing. A helical membrane pass occupies residues 422–442 (VFVAVWVLVVGFGLGGWASML). The Extracellular portion of the chain corresponds to 443 to 465 (NFVHQIKTFGLFAKCFQCPPHKA).

Belongs to the amino acid/polyamine transporter 2 family. Amino acid/auxin permease (AAAP) (TC 2.A.18.1) subfamily. In terms of tissue distribution, shoots and roots of nodulating plants. Low levels in roots, nodules, stems, petioles, leaves, shoot apices and flowers.

Its subcellular location is the cell membrane. Its function is as follows. Carrier protein involved in proton-driven auxin influx. Mediates the formation of auxin gradient from developing leaves (site of auxin biosynthesis) to tips by contributing to the loading of auxin in vascular tissues and facilitating acropetal (base to tip) auxin transport within inner tissues of the root apex, and basipetal (tip to base) auxin transport within outer tissues of the root apex. May be involved in lateral roots and nodules formation. The polypeptide is Auxin transporter-like protein 3 (LAX3) (Medicago truncatula (Barrel medic)).